The following is a 316-amino-acid chain: Transaldolase A (316 aa).

The active-site Schiff-base intermediate with substrate is the Lys-131.

The protein belongs to the transaldolase family. Type 1 subfamily. Homodimer.

The protein resides in the cytoplasm. The enzyme catalyses D-sedoheptulose 7-phosphate + D-glyceraldehyde 3-phosphate = D-erythrose 4-phosphate + beta-D-fructose 6-phosphate. Its pathway is carbohydrate degradation; pentose phosphate pathway; D-glyceraldehyde 3-phosphate and beta-D-fructose 6-phosphate from D-ribose 5-phosphate and D-xylulose 5-phosphate (non-oxidative stage): step 2/3. Functionally, transaldolase is important for the balance of metabolites in the pentose-phosphate pathway. The polypeptide is Transaldolase A (Shigella flexneri).